The primary structure comprises 136 residues: Large ribosomal subunit protein uL16c (136 aa).

This sequence belongs to the universal ribosomal protein uL16 family. Part of the 50S ribosomal subunit.

Its subcellular location is the plastid. It is found in the chloroplast. The sequence is that of Large ribosomal subunit protein uL16c from Chloranthus spicatus (Chulantree).